The primary structure comprises 310 residues: MVILMYEIVRYEGGVYKNNIFKEWIEDIGGFVIQEHVMQLDVYMTLAIPQNELENIKEEAKKYKGKIIETPLAGTEIAVVAPSLSRHHLPHTACDISEYLRRFGAKPNMIGLARGVGRDIAQLREKERRLIEEHDLAVYVMGNFEDCIKNKTHLFDVDIPVVVTGGPEKIDIPYPYVGNLGRRSHRLRHGEEIRALRKMVEVITELINERRRELSYDPPIVPPVVVKDEIEKQVEEVYSILSPMPIVTQLDGLRVKLDYDKYADKIREVKVKNYTLGDIADIKRSEMKNYILIKIKPKSEVEFEMHKDKA.

This is an uncharacterized protein from Methanocaldococcus jannaschii (strain ATCC 43067 / DSM 2661 / JAL-1 / JCM 10045 / NBRC 100440) (Methanococcus jannaschii).